The sequence spans 470 residues: ATP-dependent protease ATPase subunit HslU (470 aa).

ATP-binding positions include Val22 and Gly64–Glu69. Residues Lys145–Arg187 form a disordered region. ATP-binding residues include Asp283, Glu348, and Arg420.

It belongs to the ClpX chaperone family. HslU subfamily. A double ring-shaped homohexamer of HslV is capped on each side by a ring-shaped HslU homohexamer. The assembly of the HslU/HslV complex is dependent on binding of ATP.

It is found in the cytoplasm. Its function is as follows. ATPase subunit of a proteasome-like degradation complex; this subunit has chaperone activity. The binding of ATP and its subsequent hydrolysis by HslU are essential for unfolding of protein substrates subsequently hydrolyzed by HslV. HslU recognizes the N-terminal part of its protein substrates and unfolds these before they are guided to HslV for hydrolysis. The chain is ATP-dependent protease ATPase subunit HslU from Staphylococcus saprophyticus subsp. saprophyticus (strain ATCC 15305 / DSM 20229 / NCIMB 8711 / NCTC 7292 / S-41).